Here is a 331-residue protein sequence, read N- to C-terminus: L-lactate dehydrogenase A chain (331 aa).

NAD(+) contacts are provided by residues 29–57 (GMVG…MEDK) and R98. Substrate contacts are provided by R105, N137, and R168. N137 contacts NAD(+). H192 acts as the Proton acceptor in catalysis. T247 contributes to the substrate binding site.

The protein belongs to the LDH/MDH superfamily. LDH family. In terms of assembly, homotetramer.

The protein localises to the cytoplasm. The enzyme catalyses (S)-lactate + NAD(+) = pyruvate + NADH + H(+). Its pathway is fermentation; pyruvate fermentation to lactate; (S)-lactate from pyruvate: step 1/1. Functionally, interconverts simultaneously and stereospecifically pyruvate and lactate with concomitant interconversion of NADH and NAD(+). This Dissostichus mawsoni (Antarctic cod) protein is L-lactate dehydrogenase A chain (ldha).